Here is a 39-residue protein sequence, read N- to C-terminus: Bacteriocin SRCAM 602 (39 aa).

Belongs to the bacteriocin class IIA/YGNGV family.

It localises to the secreted. Bacteriocin with antibacterial activity against C.jejuni. This is Bacteriocin SRCAM 602 from Paenibacillus polymyxa (Bacillus polymyxa).